Here is a 660-residue protein sequence, read N- to C-terminus: UvrABC system protein B (660 aa).

Residues 24–177 (KGFKEGNQFE…DDLARALIDL (154 aa)) form the Helicase ATP-binding domain. 37–44 (GVTGSGKT) lines the ATP pocket. A Beta-hairpin motif is present at residues 90–113 (YYDYYQPEAYVPQSDTYIAKDSSV). Positions 428 to 594 (QIDDLVSEVN…TIQKSVRDLI (167 aa)) constitute a Helicase C-terminal domain. Residues 620-655 (EKHIADIEKKMKKAAAELNFEAAAEYRDKLIMLKNT) form the UVR domain.

This sequence belongs to the UvrB family. Forms a heterotetramer with UvrA during the search for lesions. Interacts with UvrC in an incision complex.

It is found in the cytoplasm. Functionally, the UvrABC repair system catalyzes the recognition and processing of DNA lesions. A damage recognition complex composed of 2 UvrA and 2 UvrB subunits scans DNA for abnormalities. Upon binding of the UvrA(2)B(2) complex to a putative damaged site, the DNA wraps around one UvrB monomer. DNA wrap is dependent on ATP binding by UvrB and probably causes local melting of the DNA helix, facilitating insertion of UvrB beta-hairpin between the DNA strands. Then UvrB probes one DNA strand for the presence of a lesion. If a lesion is found the UvrA subunits dissociate and the UvrB-DNA preincision complex is formed. This complex is subsequently bound by UvrC and the second UvrB is released. If no lesion is found, the DNA wraps around the other UvrB subunit that will check the other stand for damage. This Agathobacter rectalis (strain ATCC 33656 / DSM 3377 / JCM 17463 / KCTC 5835 / VPI 0990) (Eubacterium rectale) protein is UvrABC system protein B.